The chain runs to 54 residues: Rubredoxin (54 aa).

Met1 bears the N-formylmethionine mark. In terms of domain architecture, Rubredoxin-like spans 1-54; sequence MKKYTCTVCGYIYNPEDGDPDNGVNPGTDFKDIPDDWVCPLCGVGKDQFEEVEE. Fe cation contacts are provided by Cys6, Cys9, Cys39, and Cys42.

Belongs to the rubredoxin family. It depends on Fe(3+) as a cofactor.

Its function is as follows. Rubredoxin is a small nonheme, iron protein lacking acid-labile sulfide. Its single Fe, chelated to 4 Cys, functions as an electron acceptor and may also stabilize the conformation of the molecule. This is Rubredoxin from Clostridium pasteurianum.